Consider the following 102-residue polypeptide: Small ribosomal subunit protein uS10 (102 aa).

It belongs to the universal ribosomal protein uS10 family. Part of the 30S ribosomal subunit.

Involved in the binding of tRNA to the ribosomes. The chain is Small ribosomal subunit protein uS10 from Lactobacillus delbrueckii subsp. bulgaricus (strain ATCC 11842 / DSM 20081 / BCRC 10696 / JCM 1002 / NBRC 13953 / NCIMB 11778 / NCTC 12712 / WDCM 00102 / Lb 14).